The sequence spans 355 residues: MNPIRKIIHIDMDCFYAAIEMRDFPELANKPIAVGGDAKRRGVIATCNYAARQFGIRSAMPTAHALKLCRELILRPVRMDVYQKESQYIRSLLTEYTDLIEPLSLDEAYLDVTESTQCQGSATWIAEEIRARIYQARQLTASAGIAPNKSLAKIASDWHKPNGQMVIRPEDVSAFVLDLPVRKLFGVGPKMEEKLRALNIKTCADLQRYSIEYLLQKFGTMGQRLYELARGIDNRPVNPERIRKSISVEETYPKDLPNSEACLAVLPDLMARLEARIQRAGKISGIHNLFVKLKFNDFQQTTIERVMDKLDLIVLRQLIQEGFARRGMPVRLLGIGIKLKQENTYQSVQLPLLDL.

In terms of domain architecture, UmuC spans 7-188; that stretch reads IIHIDMDCFY…LPVRKLFGVG (182 aa). Mg(2+)-binding residues include D11 and D106. Residue E107 is part of the active site.

This sequence belongs to the DNA polymerase type-Y family. Monomer. The cofactor is Mg(2+).

It is found in the cytoplasm. It catalyses the reaction DNA(n) + a 2'-deoxyribonucleoside 5'-triphosphate = DNA(n+1) + diphosphate. In terms of biological role, poorly processive, error-prone DNA polymerase involved in untargeted mutagenesis. Copies undamaged DNA at stalled replication forks, which arise in vivo from mismatched or misaligned primer ends. These misaligned primers can be extended by PolIV. Exhibits no 3'-5' exonuclease (proofreading) activity. May be involved in translesional synthesis, in conjunction with the beta clamp from PolIII. The chain is DNA polymerase IV from Legionella pneumophila subsp. pneumophila (strain Philadelphia 1 / ATCC 33152 / DSM 7513).